The following is a 327-amino-acid chain: Ornithine carbamoyltransferase, mitochondrial (327 aa).

Residues 63 to 66 (STRT), Arg114, His141, and Gln144 each bind carbamoyl phosphate. L-ornithine is bound by residues Asn172, Asp236, Ser240, and Met241. Cys276 acts as the Proton acceptor in catalysis. Carbamoyl phosphate-binding positions include 276-277 (CL) and Arg303.

It belongs to the aspartate/ornithine carbamoyltransferase superfamily. OTCase family. In terms of assembly, interacts with trx2.

The protein resides in the mitochondrion matrix. The catalysed reaction is carbamoyl phosphate + L-ornithine = L-citrulline + phosphate + H(+). It functions in the pathway amino-acid biosynthesis; L-arginine biosynthesis; L-arginine from L-ornithine and carbamoyl phosphate: step 1/3. Functionally, ornithine carbamoyltransferase involved in the synthesis of arginine from glutamate via ornithine and the urea cycle. This is Ornithine carbamoyltransferase, mitochondrial (arg3) from Schizosaccharomyces pombe (strain 972 / ATCC 24843) (Fission yeast).